The following is a 270-amino-acid chain: ATP synthase subunit a (270 aa).

5 helical membrane-spanning segments follow: residues 37 to 57, 98 to 118, 143 to 163, 217 to 237, and 239 to 259; these read NVHI…LWVF, IAPL…MDLV, DVNI…YYSI, VVFI…GALP, and AIFH…LTIV.

This sequence belongs to the ATPase A chain family. F-type ATPases have 2 components, CF(1) - the catalytic core - and CF(0) - the membrane proton channel. CF(1) has five subunits: alpha(3), beta(3), gamma(1), delta(1), epsilon(1). CF(0) has three main subunits: a(1), b(2) and c(9-12). The alpha and beta chains form an alternating ring which encloses part of the gamma chain. CF(1) is attached to CF(0) by a central stalk formed by the gamma and epsilon chains, while a peripheral stalk is formed by the delta and b chains.

Its subcellular location is the cell inner membrane. Key component of the proton channel; it plays a direct role in the translocation of protons across the membrane. This chain is ATP synthase subunit a, found in Aliivibrio fischeri (strain ATCC 700601 / ES114) (Vibrio fischeri).